A 140-amino-acid chain; its full sequence is Large ribosomal subunit protein uL11 (140 aa).

Belongs to the universal ribosomal protein uL11 family. In terms of assembly, part of the ribosomal stalk of the 50S ribosomal subunit. Interacts with L10 and the large rRNA to form the base of the stalk. L10 forms an elongated spine to which L12 dimers bind in a sequential fashion forming a multimeric L10(L12)X complex. Post-translationally, one or more lysine residues are methylated.

Functionally, forms part of the ribosomal stalk which helps the ribosome interact with GTP-bound translation factors. The protein is Large ribosomal subunit protein uL11 of Dehalococcoides mccartyi (strain ATCC BAA-2266 / KCTC 15142 / 195) (Dehalococcoides ethenogenes (strain 195)).